The following is a 96-amino-acid chain: UPF0235 protein YggU (96 aa).

Belongs to the UPF0235 family.

The protein is UPF0235 protein YggU of Salmonella arizonae (strain ATCC BAA-731 / CDC346-86 / RSK2980).